Here is a 188-residue protein sequence, read N- to C-terminus: Elongation factor P 1 (188 aa).

Belongs to the elongation factor P family.

It localises to the cytoplasm. Its pathway is protein biosynthesis; polypeptide chain elongation. Its function is as follows. Involved in peptide bond synthesis. Stimulates efficient translation and peptide-bond synthesis on native or reconstituted 70S ribosomes in vitro. Probably functions indirectly by altering the affinity of the ribosome for aminoacyl-tRNA, thus increasing their reactivity as acceptors for peptidyl transferase. In Porphyromonas gingivalis (strain ATCC BAA-308 / W83), this protein is Elongation factor P 1 (efp1).